We begin with the raw amino-acid sequence, 147 residues long: TRAF-interacting protein with FHA domain-containing protein B (147 aa).

Positions 36–108 constitute an FHA domain; sequence LLVGRGQNTH…LGTINRISFS (73 aa).

In terms of assembly, interacts with TIFA. Expressed at high levels in spleen and at moderate levels in lung, thymus, and small intestine.

In terms of biological role, inhibits TIFA-mediated TRAF6 activation possibly by inducing a conformational change in TIFA. This Mus musculus (Mouse) protein is TRAF-interacting protein with FHA domain-containing protein B.